We begin with the raw amino-acid sequence, 772 residues long: Major capsid protein (772 aa).

A disordered region spans residues 593 to 772 (GIAPGRSNAG…AAQADRAEGQ (180 aa)). Gly residues predominate over residues 654 to 664 (NRGGEAGGVTG). The span at 716–742 (PLPPAPGAAPPPPPGPPNGPPAGPPPS) shows a compositional bias: pro residues. A compositionally biased stretch (low complexity) spans 743–766 (DDGSSNPAAPVPTAIHAPPAAAQA).

Belongs to the totivirus major capsid protein family.

It is found in the virion. In terms of biological role, capsid protein self-assembles to form an icosahedral capsid with a T=2 symmetry, 40 nm in diameter, and consisting of 60 capsid proteins asymmetric dimers. The capsid encapsulates the genomic dsRNA and the polymerase and remains intact following cell entry to protect the dsRNA from degradation and to prevent unfavorable antiviral responses in the host cell during all the replication cycle of the virus. Nascent transcripts are transcribed within the structural confines of the virion and are extruded into the cytoplasm. Functionally, binds and removes 5' cap structures from cellular mRNA. The sequence is that of Major capsid protein from Helminthosporium victoriae virus-190S (Hv190SV).